A 429-amino-acid polypeptide reads, in one-letter code: Protein ABERRANT PANICLE ORGANIZATION 1 (429 aa).

Residues 1–11 show a composition bias toward pro residues; sequence MMNPRRLPPLP. Residues 1 to 21 are disordered; that stretch reads MMNPRRLPPLPSSTSSASAAD. Residues 25–71 enclose the F-box domain; the sequence is PRVWRRLPQPLVDRVLACLPTPSFLRLRAACRRFYHLLFSSPFLHSH. The next 2 membrane-spanning stretches (helical) occupy residues 72-92 and 112-132; these read LLLSPHLPFFAFVVPAAGHLL and VAGGPAAFSPAAASAGLLAFL. Kelch repeat units follow at residues 229–277, 284–339, and 350–397; these read MAFA…ELGG, RVAL…AEGG, and YVVL…GAAG.

As to quaternary structure, part of a putative SCF (ASK/Cullin/F-box) ubiquitin ligase complex. Interacts with FL/APO2. As to expression, expressed in seedlings, roots, leaves, shoot apical meristem (SAM), developing panicles, and, at lower levels, in developing seeds.

Its subcellular location is the membrane. It participates in protein modification; protein ubiquitination. Functionally, component of SCF(ASK-cullin-F-box) E3 ubiquitin ligase complexes, which may mediate the ubiquitination and subsequent proteasomal degradation of target proteins. Together with FL/APO2, involved in the temporal regulation of meristem identity during both vegetative and reproductive developments in an APO2-dependent manner. Promotes spikelet formation by suppressing the precocious conversion of inflorescence meristems to spikelet meristems, probably via a positive regulation of class-C floral homeotic genes, but not of class-B genes, and through the control of cell proliferation in meristems. Mediates culm development and strength/diameter enhancement at internodes. Required for the regulation of the plastochron, floral organ identity, and floral determinacy. Controls the number of primary rachis branches (PRBs). May trigger the formation of vascular bundle systems which, consequently, promote carbohydrate translocation to panicles. Involved in ozone-induced grain yield regulation. The polypeptide is Protein ABERRANT PANICLE ORGANIZATION 1 (Oryza sativa subsp. indica (Rice)).